Consider the following 173-residue polypeptide: Alpha-crystallin A chain (173 aa).

Met-1 bears the N-acetylmethionine mark. The interval 1 to 63 (MDVTIQHPWF…RTVLDSGISE (63 aa)) is required for complex formation with BFSP1 and BFSP2; during homooligomerization, mediates the association of 2 dimers to form a tetramer. The residue at position 6 (Gln-6) is a Deamidated glutamine; partial. Ser-45 carries the phosphoserine modification. A Deamidated glutamine; partial modification is found at Gln-50. Residues 52–164 (LFRTVLDSGI…AERAIPVSRE (113 aa)) form the sHSP domain. Lys-70 bears the N6-acetyllysine mark. Position 90 is a deamidated glutamine; partial (Gln-90). Lys-99 carries the post-translational modification N6-acetyllysine. His-100 is a Zn(2+) binding site. Deamidated asparagine; partial is present on Asn-101. Residues Glu-102 and His-107 each coordinate Zn(2+). Residue Ser-122 is modified to Phosphoserine. Asn-123 carries the post-translational modification Deamidated asparagine; partial. A disulfide bridge connects residues Cys-131 and Cys-142. At Gln-147 the chain carries Deamidated glutamine; partial. His-154 serves as a coordination point for Zn(2+). Ser-162 carries O-linked (GlcNAc) serine glycosylation.

The protein belongs to the small heat shock protein (HSP20) family. In terms of assembly, heteropolymer composed of three CRYAA and one CRYAB subunits. Inter-subunit bridging via zinc ions enhances stability, which is crucial as there is no protein turn over in the lens. Can also form homodimers and homotetramers (dimers of dimers) which serve as the building blocks of homooligomers. Within homooligomers, the zinc-binding motif is created from residues of 3 different molecules. His-100 and Glu-102 from one molecule are ligands of the zinc ion, and His-107 and His-154 residues from additional molecules complete the site with tetrahedral coordination geometry. Part of a complex required for lens intermediate filament formation composed of BFSP1, BFSP2 and CRYAA. In terms of processing, O-glycosylated; contains N-acetylglucosamine side chains. Deamidation of Asn-101 in lens occurs mostly during the first 30 years of age, followed by a small additional amount of deamidation (approximately 5%) during the next approximately 38 years, resulting in a maximum of approximately 50% deamidation during the lifetime of the individual. Post-translationally, phosphorylation on Ser-122 seems to be developmentally regulated. Absent in the first months of life, it appears during the first 12 years of human lifetime. The relative amount of phosphorylated form versus unphosphorylated form does not change over the lifetime of the individual. In terms of processing, acetylation at Lys-70 may increase chaperone activity. Undergoes age-dependent proteolytical cleavage at the C-terminus. Alpha-crystallin A(1-172) is the most predominant form produced most rapidly during the first 12 years of age and after this age is present in approximately 50% of the lens molecules. Post-translationally, in young individuals and during the first approximately 30 years of life, less than half molecules contain an intramolecular disulfide bond (oxidized form), while in the remaining fraction the cysteines are in the free sulfhydryl form (reduced form). With aging, the amount of oxidized form increases up to 90% and it becomes a major constituent of high molecular weight aggregates, concomitant with an age-dependent loss of its chaperone activity. The reduced form is undetectable in cataractous lenses. Expressed in the eye lens (at protein level).

It is found in the cytoplasm. It localises to the nucleus. In terms of biological role, contributes to the transparency and refractive index of the lens. In its oxidized form (absence of intramolecular disulfide bond), acts as a chaperone, preventing aggregation of various proteins under a wide range of stress conditions. Required for the correct formation of lens intermediate filaments as part of a complex composed of BFSP1, BFSP2 and CRYAA. The chain is Alpha-crystallin A chain (CRYAA) from Homo sapiens (Human).